Reading from the N-terminus, the 219-residue chain is UPF0173 metal-dependent hydrolase LSL_0324 (219 aa).

Belongs to the UPF0173 family.

The chain is UPF0173 metal-dependent hydrolase LSL_0324 from Ligilactobacillus salivarius (strain UCC118) (Lactobacillus salivarius).